The primary structure comprises 90 residues: Small ribosomal subunit protein uS19 (90 aa).

Belongs to the universal ribosomal protein uS19 family.

Functionally, protein S19 forms a complex with S13 that binds strongly to the 16S ribosomal RNA. The polypeptide is Small ribosomal subunit protein uS19 (Thioalkalivibrio sulfidiphilus (strain HL-EbGR7)).